The chain runs to 174 residues: Bifunctional protein PyrR 2 (174 aa).

Substrate is bound by residues T39–R40, D100–T108, and R133. A PRPP-binding motif is present at residues V96–T108.

Belongs to the purine/pyrimidine phosphoribosyltransferase family. PyrR subfamily. Homodimer and homohexamer; in equilibrium.

It catalyses the reaction UMP + diphosphate = 5-phospho-alpha-D-ribose 1-diphosphate + uracil. Regulates transcriptional attenuation of the pyrimidine nucleotide (pyr) operon by binding in a uridine-dependent manner to specific sites on pyr mRNA. This disrupts an antiterminator hairpin in the RNA and favors formation of a downstream transcription terminator, leading to a reduced expression of downstream genes. Functionally, also displays a weak uracil phosphoribosyltransferase activity which is not physiologically significant. In Lactiplantibacillus plantarum (strain ATCC BAA-793 / NCIMB 8826 / WCFS1) (Lactobacillus plantarum), this protein is Bifunctional protein PyrR 2 (pyrR2).